The primary structure comprises 59 residues: Putative potassium channel toxin Ts25 (59 aa).

An N-terminal signal peptide occupies residues 1–22 (MKAFYGILIIFILISMIHLSQQ). Disulfide bonds link Cys29–Cys50, Cys35–Cys55, and Cys39–Cys57.

This sequence belongs to the short scorpion toxin superfamily. Potassium channel inhibitor family. Alpha-KTx 04 subfamily. Expressed by the venom gland.

The protein resides in the secreted. In terms of biological role, potently blocks Kv1.1/KCNA1 (85%), Kv1.2/KCNA2 (91%), Kv1.3/KCNA3 (89%), Kv1.6/KCNA6 (94%), and Shaker (97%). This is Putative potassium channel toxin Ts25 from Tityus serrulatus (Brazilian scorpion).